The primary structure comprises 278 residues: Tryptophan 2,3-dioxygenase (278 aa).

Substrate contacts are provided by residues 47-51, Tyr-109, and Arg-113; that span reads FIVQH. His-236 contributes to the heme binding site. Thr-250 is a binding site for substrate.

This sequence belongs to the tryptophan 2,3-dioxygenase family. In terms of assembly, homotetramer. It depends on heme as a cofactor.

It carries out the reaction L-tryptophan + O2 = N-formyl-L-kynurenine. It participates in amino-acid degradation; L-tryptophan degradation via kynurenine pathway; L-kynurenine from L-tryptophan: step 1/2. Its function is as follows. Heme-dependent dioxygenase that catalyzes the oxidative cleavage of the L-tryptophan (L-Trp) pyrrole ring and converts L-tryptophan to N-formyl-L-kynurenine. Catalyzes the oxidative cleavage of the indole moiety. This is Tryptophan 2,3-dioxygenase from Ralstonia pickettii (strain 12J).